Here is a 317-residue protein sequence, read N- to C-terminus: tRNA uridine(34) hydroxylase (317 aa).

Positions 129-223 constitute a Rhodanese domain; that stretch reads TDPEVLLIDT…YLEEVPEQES (95 aa). Residue C183 is the Cysteine persulfide intermediate of the active site. Residues 298 to 317 form a disordered region; the sequence is AKARNQPHPIGRNYRLPSEA.

The protein belongs to the TrhO family.

It catalyses the reaction uridine(34) in tRNA + AH2 + O2 = 5-hydroxyuridine(34) in tRNA + A + H2O. Functionally, catalyzes oxygen-dependent 5-hydroxyuridine (ho5U) modification at position 34 in tRNAs. This is tRNA uridine(34) hydroxylase from Pseudomonas syringae pv. tomato (strain ATCC BAA-871 / DC3000).